Here is a 768-residue protein sequence, read N- to C-terminus: Levansucrase (768 aa).

A signal peptide spans 1–36; sequence MLENKKHKKMSLSGKSLLMGTLSTAAIVLSASTVNA. Composition is skewed to polar residues over residues 57-68, 80-99, 106-134, and 143-153; these read SASVNKNDNSGL, TETNLNSSLNSGKETSSQVN, SSTQVGSTPISSAIINNGKASSDLNQDSD, and NNSQGQSSTSS. Residues 57–158 form a disordered region; the sequence is SASVNKNDNS…SSTSSEKTEL (102 aa). 3 residues coordinate sucrose: Trp250, Asp251, and Ser320. The active-site Nucleophile is Asp251. Residue Asp398 participates in Ca(2+) binding. The sucrose site is built by Arg403 and Asp404. Ca(2+)-binding residues include Gln429, Asn468, and Asp502. Residue Glu503 coordinates sucrose. Glu505 acts as the Proton donor/acceptor in catalysis. Position 523 (Arg523) interacts with sucrose. A disordered region spans residues 688–736; it reads HQPVTPNVPTTPEKPENPTTPNTPDTPRTPEVPTTPVKKTTQSELPKAG. Low complexity predominate over residues 691–727; sequence VTPNVPTTPEKPENPTTPNTPDTPRTPEVPTTPVKKT. Residues 732-736 carry the LPXTG sorting signal motif; it reads LPKAG. Pentaglycyl murein peptidoglycan amidated alanine is present on Ala735. A propeptide spans 736–768 (removed by sortase); it reads GAKDGIAATILGAISSMLGVIGLAGISKRKRNN.

Belongs to the glycosyl hydrolase 68 family.

The protein localises to the secreted. The protein resides in the cell wall. It localises to the cell surface. The enzyme catalyses [6)-beta-D-fructofuranosyl-(2-&gt;](n) alpha-D-glucopyranoside + sucrose = [6)-beta-D-fructofuranosyl-(2-&gt;](n+1) alpha-D-glucopyranoside + D-glucose. With respect to regulation, calcium ions are required for optimal activity, but do not seem to be essential since addition of EDTA causes only a 48% drop in activity. Ca(2+) may play an important structural role and promote stability of levansucrase. Fructosyltransferase that catalyzes the polymerization of the fructose moiety of sucrose to produce levan polymer and the fructo-oligosaccharide (FOS) 1-kestose. Is also able to convert raffinose into a fructan polymer and a single oligosaccharide (most likely Gal-Glc-Frc-Frc) in vitro; however, L.gasseri strain DSM 20077 is unable to ferment raffinose. Also displays sucrose hydrolase activity. The sequence is that of Levansucrase from Lactobacillus gasseri.